We begin with the raw amino-acid sequence, 245 residues long: rRNA adenine N-6-methyltransferase (245 aa).

Residues asparagine 10, leucine 12, glycine 37, glutamate 58, aspartate 83, and asparagine 100 each contribute to the S-adenosyl-L-methionine site.

Belongs to the class I-like SAM-binding methyltransferase superfamily. rRNA adenine N(6)-methyltransferase family.

It carries out the reaction adenosine(2085) in 23S rRNA + 2 S-adenosyl-L-methionine = N(6)-dimethyladenosine(2085) in 23S rRNA + 2 S-adenosyl-L-homocysteine + 2 H(+). This protein produces a dimethylation of the adenine residue at position 2085 in 23S rRNA, resulting in reduced affinity between ribosomes and macrolide-lincosamide-streptogramin B antibiotics. The sequence is that of rRNA adenine N-6-methyltransferase (ermB) from Enterococcus faecalis (strain ATCC 700802 / V583).